We begin with the raw amino-acid sequence, 158 residues long: NAD(P)H-quinone oxidoreductase subunit J, chloroplastic (158 aa).

It belongs to the complex I 30 kDa subunit family. As to quaternary structure, NDH is composed of at least 16 different subunits, 5 of which are encoded in the nucleus.

Its subcellular location is the plastid. It localises to the chloroplast thylakoid membrane. The enzyme catalyses a plastoquinone + NADH + (n+1) H(+)(in) = a plastoquinol + NAD(+) + n H(+)(out). It carries out the reaction a plastoquinone + NADPH + (n+1) H(+)(in) = a plastoquinol + NADP(+) + n H(+)(out). Its function is as follows. NDH shuttles electrons from NAD(P)H:plastoquinone, via FMN and iron-sulfur (Fe-S) centers, to quinones in the photosynthetic chain and possibly in a chloroplast respiratory chain. The immediate electron acceptor for the enzyme in this species is believed to be plastoquinone. Couples the redox reaction to proton translocation, and thus conserves the redox energy in a proton gradient. This Liriodendron tulipifera (Tuliptree) protein is NAD(P)H-quinone oxidoreductase subunit J, chloroplastic.